The following is a 124-amino-acid chain: Small ribosomal subunit protein bS16 (124 aa).

A compositionally biased stretch (basic and acidic residues) spans 84 to 110 (EKAERKNLKKGEPGKAAKERAEKRAAR). The tract at residues 84-124 (EKAERKNLKKGEPGKAAKERAEKRAAREAAANAPAEEAASE) is disordered. The segment covering 111–124 (EAAANAPAEEAASE) has biased composition (low complexity).

This sequence belongs to the bacterial ribosomal protein bS16 family.

This chain is Small ribosomal subunit protein bS16, found in Paracoccus denitrificans (strain Pd 1222).